Here is a 338-residue protein sequence, read N- to C-terminus: UDP-3-O-acylglucosamine N-acyltransferase (338 aa).

The active-site Proton acceptor is the H251.

It belongs to the transferase hexapeptide repeat family. LpxD subfamily. As to quaternary structure, homotrimer.

It catalyses the reaction a UDP-3-O-[(3R)-3-hydroxyacyl]-alpha-D-glucosamine + a (3R)-hydroxyacyl-[ACP] = a UDP-2-N,3-O-bis[(3R)-3-hydroxyacyl]-alpha-D-glucosamine + holo-[ACP] + H(+). It participates in bacterial outer membrane biogenesis; LPS lipid A biosynthesis. Functionally, catalyzes the N-acylation of UDP-3-O-acylglucosamine using 3-hydroxyacyl-ACP as the acyl donor. Is involved in the biosynthesis of lipid A, a phosphorylated glycolipid that anchors the lipopolysaccharide to the outer membrane of the cell. The chain is UDP-3-O-acylglucosamine N-acyltransferase from Psychrobacter cryohalolentis (strain ATCC BAA-1226 / DSM 17306 / VKM B-2378 / K5).